Reading from the N-terminus, the 285-residue chain is Phosphatidylserine decarboxylase proenzyme (285 aa).

Residues aspartate 89, histidine 146, and serine 252 each act as charge relay system; for autoendoproteolytic cleavage activity in the active site. The active-site Schiff-base intermediate with substrate; via pyruvic acid; for decarboxylase activity is the serine 252. Serine 252 is modified (pyruvic acid (Ser); by autocatalysis).

Belongs to the phosphatidylserine decarboxylase family. PSD-B subfamily. Prokaryotic type I sub-subfamily. Heterodimer of a large membrane-associated beta subunit and a small pyruvoyl-containing alpha subunit. Requires pyruvate as cofactor. Post-translationally, is synthesized initially as an inactive proenzyme. Formation of the active enzyme involves a self-maturation process in which the active site pyruvoyl group is generated from an internal serine residue via an autocatalytic post-translational modification. Two non-identical subunits are generated from the proenzyme in this reaction, and the pyruvate is formed at the N-terminus of the alpha chain, which is derived from the carboxyl end of the proenzyme. The autoendoproteolytic cleavage occurs by a canonical serine protease mechanism, in which the side chain hydroxyl group of the serine supplies its oxygen atom to form the C-terminus of the beta chain, while the remainder of the serine residue undergoes an oxidative deamination to produce ammonia and the pyruvoyl prosthetic group on the alpha chain. During this reaction, the Ser that is part of the protease active site of the proenzyme becomes the pyruvoyl prosthetic group, which constitutes an essential element of the active site of the mature decarboxylase.

Its subcellular location is the cell membrane. The enzyme catalyses a 1,2-diacyl-sn-glycero-3-phospho-L-serine + H(+) = a 1,2-diacyl-sn-glycero-3-phosphoethanolamine + CO2. Its pathway is phospholipid metabolism; phosphatidylethanolamine biosynthesis; phosphatidylethanolamine from CDP-diacylglycerol: step 2/2. Functionally, catalyzes the formation of phosphatidylethanolamine (PtdEtn) from phosphatidylserine (PtdSer). The protein is Phosphatidylserine decarboxylase proenzyme of Vibrio cholerae serotype O1 (strain ATCC 39541 / Classical Ogawa 395 / O395).